The following is a 402-amino-acid chain: Dynactin subunit 2 (402 aa).

The segment at 1-24 (MADPKYADLPGIARNEPDVYETSD) is disordered. Ala-2 is modified (N-acetylalanine). The residue at position 6 (Tyr-6) is a Phosphotyrosine. A Phosphoserine modification is found at Ser-83. Residue Tyr-86 is modified to Phosphotyrosine. The stretch at 100-130 (QQKYQRLLHEVQELTTEVEKIKTTVKESATE) forms a coiled coil. Phosphothreonine is present on residues Thr-134 and Thr-199. The tract at residues 185 to 205 (KSSKGSSGGKSTGGTPPDSSL) is disordered. Residues 215–247 (EQDKFSQAAKVAELEKRLTELEATVRCDQDAQN) adopt a coiled-coil conformation. Position 321 is a phosphoserine (Ser-321).

The protein belongs to the dynactin subunit 2 family. In terms of assembly, subunit of dynactin, a multiprotein complex part of a tripartite complex with dynein and a adapter, such as BICDL1, BICD2 or HOOK3. The dynactin complex is built around ACTR1A/ACTB filament and consists of an actin-related filament composed of a shoulder domain, a pointed end and a barbed end. Its length is defined by its flexible shoulder domain. The soulder is composed of 2 DCTN1 subunits, 4 DCTN2 and 2 DCTN3. The 4 DCNT2 (via N-terminus) bind the ACTR1A filament and act as molecular rulers to determine the length. The pointed end is important for binding dynein-dynactin cargo adapters and consists of 4 subunits: ACTR10, DCNT4, DCTN5 and DCTN6. The barbed end is composed of a CAPZA1:CAPZB heterodimers, which binds ACTR1A/ACTB filament and dynactin and stabilizes dynactin. Interacts with BICD2 and CEP135. Interacts with DYNAP. Interacts with ECPAS. Interacts with MAPRE1.

Its subcellular location is the cytoplasm. It localises to the cytoskeleton. The protein localises to the microtubule organizing center. The protein resides in the centrosome. It is found in the membrane. Functionally, part of the dynactin complex that activates the molecular motor dynein for ultra-processive transport along microtubules. In the dynactin soulder domain, binds the ACTR1A filament and acts as a molecular ruler to determine the length. Modulates cytoplasmic dynein binding to an organelle, and plays a role in prometaphase chromosome alignment and spindle organization during mitosis. Involved in anchoring microtubules to centrosomes. May play a role in synapse formation during brain development. In Rattus norvegicus (Rat), this protein is Dynactin subunit 2 (Dctn2).